We begin with the raw amino-acid sequence, 517 residues long: Serine hydroxymethyltransferase 1, mitochondrial (517 aa).

Residues M1 to S30 constitute a mitochondrion transit peptide. K286 is subject to N6-(pyridoxal phosphate)lysine.

This sequence belongs to the SHMT family. As to quaternary structure, homotetramer. Interacts with GLU1. Interacts with UBP16. Pyridoxal 5'-phosphate is required as a cofactor. In terms of processing, ubiquitinated. In terms of tissue distribution, ubiquitous. Mostly expressed in leaves, less abundant in stems, flowers and siliques, and barely detectable in roots.

It is found in the mitochondrion. Its subcellular location is the cytoplasm. It carries out the reaction (6R)-5,10-methylene-5,6,7,8-tetrahydrofolate + glycine + H2O = (6S)-5,6,7,8-tetrahydrofolate + L-serine. The protein operates within one-carbon metabolism; tetrahydrofolate interconversion. Functions in the photorespiratory pathway in catalyzing the interconversion of serine and glycine. Involved in controlling cell damage caused by abiotic stress, such as high light and salt and the hypersensitive defense response of plants. The sequence is that of Serine hydroxymethyltransferase 1, mitochondrial from Arabidopsis thaliana (Mouse-ear cress).